We begin with the raw amino-acid sequence, 644 residues long: Transcription factor cep-1 (644 aa).

A DNA-binding region spans residues 223–418; that stretch reads EKWMEIDVLK…NFCEREDAKQ (196 aa). Cys-307, His-310, Cys-361, and Cys-365 together coordinate Zn(2+). The interval 528 to 555 is required for tertiary structure stability of the protein; that stretch reads TNYSFRTLTLSTAEYTKVVEFLAREAKV.

Belongs to the p53 family. Homodimer. Interacts (via C-terminus domain) with prmt-5; not methylated by prmt-5. Interacts with cbp-1 (via HAT domain); cep-1 transcriptional activity may be inhibited by interaction with methylated cbp-1. Component of a complex that contains prmt-5 and cbp-1. Interacts with ape-1; the interaction inhibits pro-apoptotic activity of cep-1. Requires Zn(2+) as cofactor. Phosphorylated in response to IR-induced DNA damage which is thought to be mediated by akt-1. As to expression, expressed in pharyngeal muscle and neurons.

It localises to the nucleus. Functionally, transcriptional activator that binds the same DNA consensus sequence as p53. Has a role in normal development to ensure proper meiotic chromosome segregation. Promotes apoptosis under conditions of cellular and genotoxic stress in response to DNA damage, hypoxia, or starvation. Regulates germline apoptosis in response to DNA damage. Its pro-apoptotic activity is inhibited when bound to ape-1 in vitro. Plays a role in cell cycle arrest in the germline in response to DNA damage by UV-C light. However, not required for survival in response to DNA damage induced by UV-C light, indicating that it is unlikely to be involved in DNA repair. Required for induction of ced-13 in response to DNA damage. Regulates DNA damage-induced apoptosis by inducing transcription of the programmed cell death activator egl-1. Regulates germline proliferation by activating phg-1. Modulates lifespan. This Caenorhabditis elegans protein is Transcription factor cep-1.